We begin with the raw amino-acid sequence, 537 residues long: Formimidoyltransferase-cyclodeaminase (537 aa).

A formiminotransferase N-subdomain region spans residues 1–181; that stretch reads MNKLVECVPN…GASVTGARSF (181 aa). His82 (for formimidoyltransferase activity) is an active-site residue. Position 163-172 (163-172) interacts with folate; it reads GPAKFIPSYG. The segment at 182–326 is formiminotransferase C-subdomain; sequence LIAYNVNILG…PKKRIIDYMV (145 aa). A linker region spans residues 327-335; sequence QEDLKVTQP. The interval 336–537 is cyclodeaminase/cyclohydrolase; the sequence is LASMSVRGFV…VLEILSNRKE (202 aa). The active-site For cyclodeaminase activity is Asp413.

It in the C-terminal section; belongs to the cyclodeaminase/cyclohydrolase family. The protein in the N-terminal section; belongs to the formiminotransferase family. In terms of assembly, homooctamer, including four polyglutamate binding sites. The subunits are arranged as a tetramer of dimers, and form a planar ring-shaped structure.

Its subcellular location is the cytoplasm. It is found in the cytosol. The protein resides in the golgi apparatus. It localises to the cytoskeleton. The protein localises to the microtubule organizing center. Its subcellular location is the centrosome. It is found in the centriole. The catalysed reaction is 5-formimidoyltetrahydrofolate + L-glutamate = N-formimidoyl-L-glutamate + (6S)-5,6,7,8-tetrahydrofolate. It carries out the reaction 5-formimidoyltetrahydrofolate + 2 H(+) = (6R)-5,10-methenyltetrahydrofolate + NH4(+). It participates in amino-acid degradation; L-histidine degradation into L-glutamate; L-glutamate from N-formimidoyl-L-glutamate (transferase route): step 1/1. Functionally, folate-dependent enzyme, that displays both transferase and deaminase activity. Serves to channel one-carbon units from formiminoglutamate to the folate pool. The chain is Formimidoyltransferase-cyclodeaminase (ftcd) from Dictyostelium discoideum (Social amoeba).